Reading from the N-terminus, the 311-residue chain is Transcriptional regulatory protein MoaR1 (311 aa).

Positions 15-117 (LNATTAGAVQ…SEPPGYRLLI (103 aa)) form a DNA-binding region, ompR/PhoB-type.

This sequence belongs to the AfsR/DnrI/RedD regulatory family.

Functionally, acts as a positive transcriptional regulator of the molybdopterin biosynthesis moa1 locus, promoting the expression of the moaA1B1C1D1 genes. The sequence is that of Transcriptional regulatory protein MoaR1 (moaR1) from Mycobacterium bovis (strain BCG / Pasteur 1173P2).